The chain runs to 114 residues: NLP effector protein 1 (114 aa).

The protein belongs to the Necrosis inducing protein (NPP1) family.

The protein resides in the secreted. It localises to the host cytoplasm. In terms of biological role, probable secreted effector that may act as a pathogen-associated molecular pattern (PAMP) recognized by the plant immune system. Seems not to induce necrosis, neither in several susceptible or resistant Vitis species nor in the dicot model plant Nicotiana benthamiana. The protein is NLP effector protein 1 of Plasmopara viticola (Downy mildew of grapevine).